Consider the following 325-residue polypeptide: Tagatose 1,6-diphosphate aldolase 1 (325 aa).

It belongs to the aldolase LacD family.

The enzyme catalyses D-tagatofuranose 1,6-bisphosphate = D-glyceraldehyde 3-phosphate + dihydroxyacetone phosphate. Its pathway is carbohydrate metabolism; D-tagatose 6-phosphate degradation; D-glyceraldehyde 3-phosphate and glycerone phosphate from D-tagatose 6-phosphate: step 2/2. In Streptococcus pyogenes serotype M3 (strain ATCC BAA-595 / MGAS315), this protein is Tagatose 1,6-diphosphate aldolase 1 (lacD1).